We begin with the raw amino-acid sequence, 365 residues long: Gibberellin 20 oxidase 1-A (365 aa).

A Fe2OG dioxygenase domain is found at 199 to 299 (GNDSIMRLNY…RKSLAFFLCP (101 aa)). Fe cation is bound by residues His-224, Asp-226, and His-280. Residue Arg-290 is part of the active site.

This sequence belongs to the iron/ascorbate-dependent oxidoreductase family. GA20OX subfamily. Fe cation is required as a cofactor. The cofactor is L-ascorbate. In terms of tissue distribution, expressed in nodes and the ear of the elongating stem.

It catalyses the reaction gibberellin A12 + 2 2-oxoglutarate + 3 O2 + H(+) = gibberellin A9 + 2 succinate + 3 CO2 + 2 H2O. It carries out the reaction gibberellin A53 + 2 2-oxoglutarate + 3 O2 + H(+) = gibberellin A20 + 2 succinate + 3 CO2 + 2 H2O. In terms of biological role, key oxidase enzyme in the biosynthesis of gibberellin that catalyzes the conversion of GA12 and GA53 to GA9 and GA20 respectively, via a three-step oxidation at C-20 of the GA skeleton. The polypeptide is Gibberellin 20 oxidase 1-A (GA20ox1A) (Triticum aestivum (Wheat)).